A 50-amino-acid polypeptide reads, in one-letter code: Small ribosomal subunit protein uS14 (50 aa).

Residues Cys15, Cys18, Cys33, and Cys36 each coordinate Zn(2+).

This sequence belongs to the universal ribosomal protein uS14 family. Zinc-binding uS14 subfamily. As to quaternary structure, part of the 30S ribosomal subunit. Requires Zn(2+) as cofactor.

Its function is as follows. Binds 16S rRNA, required for the assembly of 30S particles. In Methanosarcina acetivorans (strain ATCC 35395 / DSM 2834 / JCM 12185 / C2A), this protein is Small ribosomal subunit protein uS14.